A 551-amino-acid chain; its full sequence is L-lactate permease (551 aa).

12 helical membrane passes run 13 to 33, 37 to 57, 70 to 90, 131 to 151, 159 to 179, 194 to 214, 244 to 264, 366 to 386, 405 to 425, 438 to 458, 494 to 514, and 530 to 550; these read NIWL…FALI, LKGY…ALLF, VYGF…AVFV, GAAG…GLGF, LCLI…PILV, MVGR…MAIM, FIGP…CLTL, FDWF…SIVW, LALP…SNYS, TGHA…FLTG, VTGK…VGLV, and IFTC…TWMI.

Belongs to the lactate permease family.

Its subcellular location is the cell inner membrane. It carries out the reaction (S)-lactate(in) + H(+)(in) = (S)-lactate(out) + H(+)(out). It catalyses the reaction (R)-lactate(in) + H(+)(in) = (R)-lactate(out) + H(+)(out). The catalysed reaction is glycolate(in) + H(+)(in) = glycolate(out) + H(+)(out). Functionally, uptake of L-lactate across the membrane. Can also transport D-lactate and glycolate. Seems to be driven by a proton motive force. The protein is L-lactate permease (lldP) of Escherichia coli O6:H1 (strain CFT073 / ATCC 700928 / UPEC).